Reading from the N-terminus, the 433-residue chain is MKWGRLLAFLAMVVVVLGLTISTGPKIWKSIPLGLDLKGGVDLLYAVDTPKGHPLDSTGKAALVRAIEMRVNSLGVSSPIIQLEGRNQLGQDQIRVEVAGVKNQQEAVSVIGATAQLAIYGSAKIDPKTGKIVPVGPPLATGADLKSNAHWVVDQQTGQNAVAIEFKNASLWTSITKRYLQKPIYVFLNGQLLTNPVVEQVMYTGQSEISGGNLTTPQACIDLANELNAGALPYPLTLESETSVGPTLGATSLHRTLIAGVIAVVLIFAFMIAAYRMAGLIADIALVAYGYLTLLTFAGLHVVLTLSGLAALILGVGIAVDANIITYERIKDEVRNGRSLRSAVRIGNKNAFRTIVDSNATTFIAGLIMYIFGGEGDVRGFAVALMVGIIVSLLTAVLFARAMLLTFTAAQAVKNPWWYGAPRGVVKSREAKV.

6 helical membrane passes run 7-27 (LAFL…GPKI), 257-277 (LIAG…AYRM), 278-298 (AGLI…LTFA), 300-320 (LHVV…GIAV), 354-374 (TIVD…IFGG), and 380-400 (GFAV…VLFA).

The protein belongs to the SecD/SecF family. SecD subfamily. As to quaternary structure, forms a complex with SecF. Part of the essential Sec protein translocation apparatus which comprises SecA, SecYEG and auxiliary proteins SecDF. Other proteins may also be involved.

Its subcellular location is the cell membrane. Its function is as follows. Part of the Sec protein translocase complex. Interacts with the SecYEG preprotein conducting channel. SecDF uses the proton motive force (PMF) to complete protein translocation after the ATP-dependent function of SecA. The sequence is that of Protein translocase subunit SecD from Alicyclobacillus acidocaldarius subsp. acidocaldarius (strain ATCC 27009 / DSM 446 / BCRC 14685 / JCM 5260 / KCTC 1825 / NBRC 15652 / NCIMB 11725 / NRRL B-14509 / 104-IA) (Bacillus acidocaldarius).